Here is a 78-residue protein sequence, read N- to C-terminus: Protein Vpr (78 aa).

Residues M1 to L42 form a homooligomerization region.

Belongs to the HIV-1 VPR protein family. Homooligomer, may form homodimer. Interacts with p6-gag region of the Pr55 Gag precursor protein through a (Leu-X-X)4 motif near the C-terminus of the P6gag protein. Interacts with host UNG. May interact with host RAD23A/HHR23A. Interacts with host VPRBP/DCAF1, leading to hijack the CUL4A-RBX1-DDB1-DCAF1/VPRBP complex, mediating ubiquitination of host proteins such as TERT and ZGPAT and arrest of the cell cycle in G2 phase. Post-translationally, phosphorylated on several residues by host. These phosphorylations regulate VPR activity for the nuclear import of the HIV-1 pre-integration complex.

Its subcellular location is the virion. It localises to the host nucleus. The protein localises to the host extracellular space. During virus replication, may deplete host UNG protein, and incude G2-M cell cycle arrest. Acts by targeting specific host proteins for degradation by the 26S proteasome, through association with the cellular CUL4A-DDB1 E3 ligase complex by direct interaction with host VPRPB/DCAF-1. Cell cycle arrest reportedly occurs within hours of infection and is not blocked by antiviral agents, suggesting that it is initiated by the VPR carried into the virion. Additionally, VPR induces apoptosis in a cell cycle dependent manner suggesting that these two effects are mechanistically linked. Detected in the serum and cerebrospinal fluid of AIDS patient, VPR may also induce cell death to bystander cells. Functionally, during virus entry, plays a role in the transport of the viral pre-integration (PIC) complex to the host nucleus. This function is crucial for viral infection of non-dividing macrophages. May act directly at the nuclear pore complex, by binding nucleoporins phenylalanine-glycine (FG)-repeat regions. The polypeptide is Protein Vpr (Human immunodeficiency virus type 1 group M subtype B (isolate PCV12) (HIV-1)).